Here is a 346-residue protein sequence, read N- to C-terminus: UPF0283 membrane protein VP1870 (346 aa).

The interval 1–30 (MSELKQKQIFSEKALEKEQQSDSPELTAQK) is disordered. Residues 21 to 30 (SDSPELTAQK) show a composition bias toward polar residues. A run of 2 helical transmembrane segments spans residues 73-93 (VFAT…VTAV) and 98-118 (WLAL…LGAI).

The protein belongs to the UPF0283 family.

The protein localises to the cell inner membrane. This Vibrio parahaemolyticus serotype O3:K6 (strain RIMD 2210633) protein is UPF0283 membrane protein VP1870.